The chain runs to 36 residues: Omega-agatoxin-Aa1b (36 aa).

This sequence belongs to the neurotoxin 04 (omega-agtx) family. 01 (type I omega-agtx) subfamily. In terms of tissue distribution, expressed by the venom gland.

It localises to the secreted. Omega-agatoxin are antagonist of voltage-gated calcium channels. They block insect neuromuscular transmission presynaptically. This toxin is a blocker of L-type calcium channels (Cav/CACNA1). This chain is Omega-agatoxin-Aa1b, found in Agelenopsis aperta (North American funnel-web spider).